The following is a 245-amino-acid chain: Carboxy-S-adenosyl-L-methionine synthase (245 aa).

S-adenosyl-L-methionine contacts are provided by residues tyrosine 42, 67-69, 92-93, 120-121, asparagine 135, and arginine 202; these read GCS, DN, and DI.

The protein belongs to the class I-like SAM-binding methyltransferase superfamily. Cx-SAM synthase family. Homodimer.

The catalysed reaction is prephenate + S-adenosyl-L-methionine = carboxy-S-adenosyl-L-methionine + 3-phenylpyruvate + H2O. In terms of biological role, catalyzes the conversion of S-adenosyl-L-methionine (SAM) to carboxy-S-adenosyl-L-methionine (Cx-SAM). In Vibrio vulnificus (strain YJ016), this protein is Carboxy-S-adenosyl-L-methionine synthase.